A 130-amino-acid chain; its full sequence is Large ribosomal subunit protein bL20c (130 aa).

It belongs to the bacterial ribosomal protein bL20 family.

It localises to the plastid. Its subcellular location is the chloroplast. Functionally, binds directly to 23S ribosomal RNA and is necessary for the in vitro assembly process of the 50S ribosomal subunit. It is not involved in the protein synthesizing functions of that subunit. The sequence is that of Large ribosomal subunit protein bL20c from Oenothera argillicola (Appalachian evening primrose).